Reading from the N-terminus, the 310-residue chain is Beta-lactamase AST-1 (310 aa).

Positions 1–31 are cleaved as a signal peptide; it reads MTFSALPFRRADRRRLLAAALAACALTLTAA. The N-palmitoyl cysteine moiety is linked to residue Cys-32. Cys-32 carries S-diacylglycerol cysteine lipidation. Ser-91 acts as the Acyl-ester intermediate in catalysis. Ser-151 contacts substrate. Glu-187 acts as the Proton acceptor in catalysis. Residue 255–257 coordinates substrate; sequence KTG.

This sequence belongs to the class-A beta-lactamase family.

The protein resides in the cell membrane. It carries out the reaction a beta-lactam + H2O = a substituted beta-amino acid. With respect to regulation, inhibited by clavulanic acid. Functionally, confers high levels of resistance to amoxicillin, benzylpenicillin, piperacillin, ticarcillin and cephalothin. Not active against ceftazidime, cefotaxime and aztreonam. The chain is Beta-lactamase AST-1 (bla) from Nocardia asteroides.